The primary structure comprises 171 residues: Co-chaperone protein HscB homolog (171 aa).

In terms of domain architecture, J spans 2–74; that stretch reads NHFELFRLPF…ISRAEYMLSE (73 aa).

Belongs to the HscB family. Interacts with HscA and stimulates its ATPase activity.

In terms of biological role, co-chaperone involved in the maturation of iron-sulfur cluster-containing proteins. Seems to help targeting proteins to be folded toward HscA. In Photobacterium profundum (strain SS9), this protein is Co-chaperone protein HscB homolog.